We begin with the raw amino-acid sequence, 120 residues long: Large ribosomal subunit protein uL18 (120 aa).

Belongs to the universal ribosomal protein uL18 family. In terms of assembly, part of the 50S ribosomal subunit; part of the 5S rRNA/L5/L18/L25 subcomplex. Contacts the 5S and 23S rRNAs.

Its function is as follows. This is one of the proteins that bind and probably mediate the attachment of the 5S RNA into the large ribosomal subunit, where it forms part of the central protuberance. In Bartonella quintana (strain Toulouse) (Rochalimaea quintana), this protein is Large ribosomal subunit protein uL18.